The following is a 179-amino-acid chain: Zinc finger HIT domain-containing protein 3 (179 aa).

Zn(2+) is bound by residues Cys11, Cys14, Cys22, Cys25, Cys30, Cys34, His38, and Cys49. The segment at 11–49 (CVVCLEKPKYRCPACRVPYCSLPCFRKHKAPPLQQLPVC) adopts an HIT-type zinc-finger fold. Position 104 is a phosphoserine (Ser104).

In terms of assembly, thyroid receptor interacting proteins (TRIPs) specifically interact with the ligand binding domain of the thyroid receptor (TR). Requires the presence of thyroid hormone for its interaction. Interacts with NUFIP1. Interacts (via HIT-type zinc finger) with the RUVBL1/RUVBL2 complex in the presence of ADP.

It localises to the cytoplasm. It is found in the nucleus. This Bos taurus (Bovine) protein is Zinc finger HIT domain-containing protein 3 (ZNHIT3).